The chain runs to 256 residues: Triosephosphate isomerase (256 aa).

Substrate is bound at residue 10–12 (NWK). His-97 acts as the Electrophile in catalysis. The active-site Proton acceptor is Glu-169. Residues Gly-175, Ser-214, and 235-236 (GG) contribute to the substrate site.

This sequence belongs to the triosephosphate isomerase family. Homodimer.

The protein localises to the cytoplasm. The enzyme catalyses D-glyceraldehyde 3-phosphate = dihydroxyacetone phosphate. It functions in the pathway carbohydrate biosynthesis; gluconeogenesis. The protein operates within carbohydrate degradation; glycolysis; D-glyceraldehyde 3-phosphate from glycerone phosphate: step 1/1. Its function is as follows. Involved in the gluconeogenesis. Catalyzes stereospecifically the conversion of dihydroxyacetone phosphate (DHAP) to D-glyceraldehyde-3-phosphate (G3P). This Actinobacillus pleuropneumoniae serotype 7 (strain AP76) protein is Triosephosphate isomerase.